A 125-amino-acid polypeptide reads, in one-letter code: Lymphocyte antigen 6 complex locus protein G6c (125 aa).

The signal sequence occupies residues 1–18 (MKALMLLTLSVLLCWVSA). Positions 20-111 (IRCHSCYKVP…PRPTPALGLV (92 aa)) constitute a UPAR/Ly6 domain. Disulfide bonds link cysteine 22-cysteine 47, cysteine 25-cysteine 33, and cysteine 39-cysteine 65. Asparagine 88 is a glycosylation site (N-linked (GlcNAc...) asparagine). Residues cysteine 92 and cysteine 97 are joined by a disulfide bond. Serine 99 carries GPI-anchor amidated serine lipidation. A propeptide spans 100 to 125 (AGPRPTPALGLVFLTSLAGLGLWLLH) (removed in mature form).

Monomer. In terms of processing, N-glycosylated. As to expression, highly expressed at the leading edges of cells, on filopodia.

The protein resides in the cell membrane. In Homo sapiens (Human), this protein is Lymphocyte antigen 6 complex locus protein G6c (LY6G6C).